A 112-amino-acid chain; its full sequence is Putative pterin-4-alpha-carbinolamine dehydratase (112 aa).

It belongs to the pterin-4-alpha-carbinolamine dehydratase family.

It catalyses the reaction (4aS,6R)-4a-hydroxy-L-erythro-5,6,7,8-tetrahydrobiopterin = (6R)-L-erythro-6,7-dihydrobiopterin + H2O. The protein is Putative pterin-4-alpha-carbinolamine dehydratase of Shewanella frigidimarina (strain NCIMB 400).